The chain runs to 384 residues: Putative glutamate--cysteine ligase 2 (384 aa).

This sequence belongs to the glutamate--cysteine ligase type 2 family. YbdK subfamily.

It carries out the reaction L-cysteine + L-glutamate + ATP = gamma-L-glutamyl-L-cysteine + ADP + phosphate + H(+). In terms of biological role, ATP-dependent carboxylate-amine ligase which exhibits weak glutamate--cysteine ligase activity. In Ruegeria pomeroyi (strain ATCC 700808 / DSM 15171 / DSS-3) (Silicibacter pomeroyi), this protein is Putative glutamate--cysteine ligase 2.